Reading from the N-terminus, the 222-residue chain is Apoptosis regulator OPG045 (222 aa).

The protein belongs to the orthopoxvirus OPG045 family. As to quaternary structure, homodimer. Interacts with host pro-apoptotic protein BCL2L11 (via BH3 domain). Interacts with host NLRP1. Interacts with host BAK.

Its subcellular location is the host mitochondrion outer membrane. The protein localises to the host cytoplasm. Plays a role in evading host innate immune response by inhibiting host inflammasome activation. Interacts with and inhibits NLR-mediated interleukin-1 beta/IL1B production in infected cells. At the host mitochondria outer membrane, interacts with the BH3 domain of host BAK and prevents BAK from binding active BAX. In turn, host apoptosis is inhibited. This Homo sapiens (Human) protein is Apoptosis regulator OPG045 (OPG045).